The chain runs to 208 residues: Probable GTP-binding protein EngB (208 aa).

Positions 29-203 constitute an EngB-type G domain; the sequence is EGREVAFAGR…WDKLGEWLGI (175 aa). Residues 37-44, 64-68, 82-85, 149-152, and 182-184 contribute to the GTP site; these read GRSNAGKS, GRTQL, DLPG, TKAD, and FSA. 2 residues coordinate Mg(2+): Ser44 and Thr66.

It belongs to the TRAFAC class TrmE-Era-EngA-EngB-Septin-like GTPase superfamily. EngB GTPase family. Requires Mg(2+) as cofactor.

In terms of biological role, necessary for normal cell division and for the maintenance of normal septation. In Alcanivorax borkumensis (strain ATCC 700651 / DSM 11573 / NCIMB 13689 / SK2), this protein is Probable GTP-binding protein EngB.